Consider the following 388-residue polypeptide: Succinate--CoA ligase [ADP-forming] subunit beta (388 aa).

Positions K9–E244 constitute an ATP-grasp domain. ATP-binding positions include K46, G53 to G55, E99, A102, and E107. The Mg(2+) site is built by N199 and D213. Substrate contacts are provided by residues N264 and G321–M323.

The protein belongs to the succinate/malate CoA ligase beta subunit family. Heterotetramer of two alpha and two beta subunits. Mg(2+) serves as cofactor.

It catalyses the reaction succinate + ATP + CoA = succinyl-CoA + ADP + phosphate. The enzyme catalyses GTP + succinate + CoA = succinyl-CoA + GDP + phosphate. The protein operates within carbohydrate metabolism; tricarboxylic acid cycle; succinate from succinyl-CoA (ligase route): step 1/1. Succinyl-CoA synthetase functions in the citric acid cycle (TCA), coupling the hydrolysis of succinyl-CoA to the synthesis of either ATP or GTP and thus represents the only step of substrate-level phosphorylation in the TCA. The beta subunit provides nucleotide specificity of the enzyme and binds the substrate succinate, while the binding sites for coenzyme A and phosphate are found in the alpha subunit. This chain is Succinate--CoA ligase [ADP-forming] subunit beta, found in Janthinobacterium sp. (strain Marseille) (Minibacterium massiliensis).